Reading from the N-terminus, the 358-residue chain is Arogenate dehydrogenase 2, chloroplastic (358 aa).

The N-terminal 36 residues, 1–36 (MLLHFSPAKPLISPPNLRRNSPTFLISPPRSLRIRA), are a transit peptide targeting the chloroplast. In terms of domain architecture, Prephenate/arogenate dehydrogenase spans 59–338 (LKIAVLGFGN…KKTEQKLLND (280 aa)). The tract at residues 336 to 358 (LNDGGVVPMNDISSSSSSSSSSS) is disordered. Residues 348-358 (SSSSSSSSSSS) are compositionally biased toward low complexity.

This sequence belongs to the prephenate/arogenate dehydrogenase family. Expressed in roots, stems, leaves, flowers, siliques and seeds. More abundant in seeds.

The protein resides in the plastid. The protein localises to the chloroplast. It carries out the reaction L-arogenate + NADP(+) = L-tyrosine + CO2 + NADPH. The protein operates within amino-acid biosynthesis; L-tyrosine biosynthesis; L-tyrosine from L-arogenate (NADP(+) route): step 1/1. Its function is as follows. Involved in the biosynthesis of tyrosine. Has a weak prephenate dehydrogenase activity. This is Arogenate dehydrogenase 2, chloroplastic (TYRAAT2) from Arabidopsis thaliana (Mouse-ear cress).